Here is a 368-residue protein sequence, read N- to C-terminus: Chorismate synthase (368 aa).

Arg-46 is a binding site for NADP(+). Residues 123 to 125 (RSS), 240 to 241 (NA), Gly-285, 300 to 304 (KPTPT), and Arg-326 each bind FMN.

It belongs to the chorismate synthase family. Homotetramer. Requires FMNH2 as cofactor.

It catalyses the reaction 5-O-(1-carboxyvinyl)-3-phosphoshikimate = chorismate + phosphate. The protein operates within metabolic intermediate biosynthesis; chorismate biosynthesis; chorismate from D-erythrose 4-phosphate and phosphoenolpyruvate: step 7/7. Functionally, catalyzes the anti-1,4-elimination of the C-3 phosphate and the C-6 proR hydrogen from 5-enolpyruvylshikimate-3-phosphate (EPSP) to yield chorismate, which is the branch point compound that serves as the starting substrate for the three terminal pathways of aromatic amino acid biosynthesis. This reaction introduces a second double bond into the aromatic ring system. The sequence is that of Chorismate synthase from Porphyromonas gingivalis (strain ATCC BAA-308 / W83).